The chain runs to 317 residues: Probable pathogenesis-related protein CaO19.6200 (317 aa).

Positions 1–23 (MKFLQSFPVILAVFSFAANLVSS) are cleaved as a signal peptide. Disordered regions lie at residues 52–116 (RLET…TTVT) and 155–179 (PSAPKPQPQPQPQENNSGTNDDSQL). The segment covering 58–76 (PTSTTTTIVIPSSKPSSPE) has biased composition (low complexity). Composition is skewed to polar residues over residues 84–116 (QPMFQSPSPVQITPSTTSINNAPSPTKPETTVT) and 168–179 (ENNSGTNDDSQL). Asn-169 carries an N-linked (GlcNAc...) asparagine glycan. Residues 187-297 (LEAHNIKRAS…GWGLYIICNY (111 aa)) enclose the SCP domain.

This sequence belongs to the CRISP family.

It is found in the secreted. Functionally, secreted protein that acts as a virulence factor during infections. This chain is Probable pathogenesis-related protein CaO19.6200, found in Candida albicans (strain SC5314 / ATCC MYA-2876) (Yeast).